The following is a 317-amino-acid chain: Ribosomal protein L11 methyltransferase (317 aa).

Residues Thr-158, Gly-179, Asp-201, and Asn-244 each coordinate S-adenosyl-L-methionine.

It belongs to the methyltransferase superfamily. PrmA family.

The protein localises to the cytoplasm. It carries out the reaction L-lysyl-[protein] + 3 S-adenosyl-L-methionine = N(6),N(6),N(6)-trimethyl-L-lysyl-[protein] + 3 S-adenosyl-L-homocysteine + 3 H(+). Methylates ribosomal protein L11. This Streptococcus pyogenes serotype M4 (strain MGAS10750) protein is Ribosomal protein L11 methyltransferase.